A 331-amino-acid polypeptide reads, in one-letter code: Proton-translocating ferredoxin:NAD(+) oxidoreductase complex subunit D (331 aa).

3 consecutive transmembrane segments (helical) span residues 23 to 43 (ESVS…AVFG), 44 to 64 (VFNF…AAVV), and 84 to 106 (AFLT…MVAI). Thr163 carries the FMN phosphoryl threonine modification. 4 consecutive transmembrane segments (helical) span residues 196–216 (NGSI…YLIY), 226–246 (VVMI…TGIF), 251–271 (VFHM…TDMV), and 273–293 (IPMT…LTSL).

It belongs to the NqrB/RnfD family. As to quaternary structure, the complex is composed of six subunits: RnfA, RnfB, RnfC, RnfD, RnfE and RnfG. FMN serves as cofactor.

Its subcellular location is the cell membrane. Its function is as follows. Part of a membrane-bound complex that couples electron transfer with translocation of ions across the membrane. Couples electron transfer from reduced ferredoxin to NAD(+) with translocation of H(+) out of the cell. Essential for energy conservation during autotrophic growth. Contributes to ATP synthesis during heterotrophic growth. This is Proton-translocating ferredoxin:NAD(+) oxidoreductase complex subunit D from Clostridium ljungdahlii (strain ATCC 55383 / DSM 13528 / PETC).